We begin with the raw amino-acid sequence, 449 residues long: Putative recombination initiation defects 3 (449 aa).

The tract at residues 21 to 56 is disordered; it reads LRRSAEPQASQQLRSQQSQQSFSQGPSSSQRGCGGF. Over residues 28 to 50 the composition is skewed to low complexity; the sequence is QASQQLRSQQSQQSFSQGPSSSQ. The Nuclear localization signal motif lies at 437 to 441; that stretch reads RTKRK.

As to quaternary structure, interacts with PRD1; this interaction facilitates a binding to DFO.

The protein resides in the nucleus. Functionally, involved in DNA cleavage that forms the double-strand breaks (DSB) that initiate meiotic recombination. This Arabidopsis thaliana (Mouse-ear cress) protein is Putative recombination initiation defects 3.